The chain runs to 144 residues: Heme transporter hrg1-B (144 aa).

4 consecutive transmembrane segments (helical) span residues 6–26 (IYIS…AFIV), 38–58 (AMGG…IMYI), 71–91 (FFMF…ATFI), and 107–127 (FYLS…LGLY). The Di-leucine motif motif lies at 140-141 (IL).

This sequence belongs to the HRG family.

It is found in the endosome membrane. The protein localises to the lysosome membrane. Its subcellular location is the cytoplasmic vesicle. It localises to the phagosome membrane. The catalysed reaction is heme b(in) = heme b(out). In terms of biological role, heme transporter that regulates intracellular heme availability through the endosomal or lysosomal compartment. In macrophages, is the heme transporter for heme-iron recycling. Essential for macrophage iron homeostasis, transports heme from the phagolysosome to the cytoplasm during erythrophagocytosis (EP). This chain is Heme transporter hrg1-B (slc48a1a), found in Danio rerio (Zebrafish).